The primary structure comprises 349 residues: Peptide transport system ATP-binding protein SapD (349 aa).

The 259-residue stretch at 1–259 (MALLDICNLN…PHHPYTQALI (259 aa)) folds into the ABC transporter domain. 40–47 (GESGSGKS) is an ATP binding site.

This sequence belongs to the ABC transporter superfamily.

It localises to the cell inner membrane. Its function is as follows. Involved in a peptide intake transport system that plays a role in the resistance to antimicrobial peptides. The protein is Peptide transport system ATP-binding protein SapD (sapD) of Haemophilus influenzae (strain ATCC 51907 / DSM 11121 / KW20 / Rd).